A 317-amino-acid chain; its full sequence is Melanocyte-stimulating hormone receptor (317 aa).

Residues 1-37 (MPMQGAQKRLLGSLNSTPTATPNLGLAANHTGAPCLE) lie on the Extracellular side of the membrane. Asparagine 29 is a glycosylation site (N-linked (GlcNAc...) asparagine). The helical transmembrane segment at 38-63 (VSIPDGLFLSLGLVSLVENVLVVAAI) threads the bilayer. Over 64 to 72 (AKNRNLHSP) the chain is Cytoplasmic. The chain crosses the membrane as a helical span at residues 73–93 (MYCFICCLALSDLLVSSSNML). Residues 94 to 118 (ETAVILLLEAGALATRASVVQQLQN) are Extracellular-facing. A helical membrane pass occupies residues 119-140 (TIDVLTCSSMLCSLCFLGAIAV). The Cytoplasmic portion of the chain corresponds to 141 to 163 (DRHVSIFYALRYHSIMTLARARR). Residues 164–183 (AIAAIWVASVLSSTLFIAYC) traverse the membrane as a helical segment. Topologically, residues 184-191 (DHAXVLLC) are extracellular. A helical membrane pass occupies residues 192–211 (LVVFFLAMLVLMAVLYVHML). The Cytoplasmic segment spans residues 212–240 (ARACQHAQGITRLHQRQPPAHQGFGFRGA). The chain crosses the membrane as a helical span at residues 241-266 (ATLTILLGIFFLCWGPFFLHLTLVVL). Residues 267–279 (CPQHLTCSCIFKN) lie on the Extracellular side of the membrane. A helical transmembrane segment spans residues 280–300 (FKVFLTLIICSTIIDPLIYAF). At 301–317 (RSQELRRTLKELLLCSW) the chain is on the cytoplasmic side. A lipid anchor (S-palmitoyl cysteine) is attached at cysteine 315.

This sequence belongs to the G-protein coupled receptor 1 family. In terms of assembly, interacts with MGRN1, but does not undergo MGRN1-mediated ubiquitination; this interaction competes with GNAS-binding and thus inhibits agonist-induced cAMP production. Interacts with OPN3; the interaction results in a decrease in MC1R-mediated cAMP signaling and ultimately a decrease in melanin production in melanocytes.

It localises to the cell membrane. In terms of biological role, receptor for MSH (alpha, beta and gamma) and ACTH. The activity of this receptor is mediated by G proteins which activate adenylate cyclase. Mediates melanogenesis, the production of eumelanin (black/brown) and phaeomelanin (red/yellow), via regulation of cAMP signaling in melanocytes. This chain is Melanocyte-stimulating hormone receptor (MC1R), found in Ateles paniscus (Black spider monkey).